Here is a 176-residue protein sequence, read N- to C-terminus: Large ribosomal subunit protein uL6 (176 aa).

The protein belongs to the universal ribosomal protein uL6 family. As to quaternary structure, part of the 50S ribosomal subunit.

Functionally, this protein binds to the 23S rRNA, and is important in its secondary structure. It is located near the subunit interface in the base of the L7/L12 stalk, and near the tRNA binding site of the peptidyltransferase center. This chain is Large ribosomal subunit protein uL6, found in Lactobacillus gasseri (strain ATCC 33323 / DSM 20243 / BCRC 14619 / CIP 102991 / JCM 1131 / KCTC 3163 / NCIMB 11718 / NCTC 13722 / AM63).